An 828-amino-acid chain; its full sequence is USP6 N-terminal-like protein (828 aa).

An N-acetylmethionine modification is found at Met1. The region spanning 100–292 (GIPLQLRGEV…RIWDIYIFEG (193 aa)) is the Rab-GAP TBC domain. Residues 355–367 (DLPEPGKEDEYPK) are compositionally biased toward basic and acidic residues. Residues 355–722 (DLPEPGKEDE…NSGSPKNGKL (368 aa)) are disordered. Ser391, Ser396, and Ser400 each carry phosphoserine. Over residues 434–451 (KSVEEESKKLKDEADFQR) the composition is skewed to basic and acidic residues. The segment covering 465–478 (NHAAANQNSNATSN) has biased composition (low complexity). Composition is skewed to basic and acidic residues over residues 498 to 508 (RTAKYTMEGKG) and 535 to 544 (KALDAEDGKR). Phosphoserine occurs at positions 546 and 549. Tyr582 carries the phosphotyrosine modification. Ser585 is modified (phosphoserine). A compositionally biased stretch (polar residues) spans 592–603 (PSSSPSKVSNKF). Phosphoserine occurs at positions 642, 655, 659, 676, and 680. 2 stretches are compositionally biased toward polar residues: residues 648–666 (TANS…QLNP) and 673–683 (STLSVSASPEK). Residues 686 to 697 (SRPSPLVLPSSR) are compositionally biased toward low complexity. At Ser716 the chain carries Phosphoserine. The residue at position 729 (Tyr729) is a Phosphotyrosine. Residues 789–817 (KASPAAEDASPSGYPYSGPPPPAYHYRNR) are disordered.

Interacts with EPS8. As to expression, widely expressed.

It localises to the golgi apparatus. Its subcellular location is the cytoplasmic vesicle. Acts as a GTPase-activating protein for RAB5A and RAB43. Involved in receptor trafficking. In complex with EPS8 inhibits internalization of EGFR. Involved in retrograde transport from the endocytic pathway to the Golgi apparatus. Involved in the transport of Shiga toxin from early and recycling endosomes to the trans-Golgi network. Required for structural integrity of the Golgi complex. The protein is USP6 N-terminal-like protein (USP6NL) of Homo sapiens (Human).